The sequence spans 196 residues: Imidazole glycerol phosphate synthase subunit HisH (196 aa).

Residues 2 to 196 (NVVILDTGCA…AKLLKNFLEM (195 aa)) enclose the Glutamine amidotransferase type-1 domain. Catalysis depends on C77, which acts as the Nucleophile. Residues H178 and E180 contribute to the active site.

In terms of assembly, heterodimer of HisH and HisF.

The protein localises to the cytoplasm. The catalysed reaction is 5-[(5-phospho-1-deoxy-D-ribulos-1-ylimino)methylamino]-1-(5-phospho-beta-D-ribosyl)imidazole-4-carboxamide + L-glutamine = D-erythro-1-(imidazol-4-yl)glycerol 3-phosphate + 5-amino-1-(5-phospho-beta-D-ribosyl)imidazole-4-carboxamide + L-glutamate + H(+). The enzyme catalyses L-glutamine + H2O = L-glutamate + NH4(+). It participates in amino-acid biosynthesis; L-histidine biosynthesis; L-histidine from 5-phospho-alpha-D-ribose 1-diphosphate: step 5/9. Its function is as follows. IGPS catalyzes the conversion of PRFAR and glutamine to IGP, AICAR and glutamate. The HisH subunit catalyzes the hydrolysis of glutamine to glutamate and ammonia as part of the synthesis of IGP and AICAR. The resulting ammonia molecule is channeled to the active site of HisF. This is Imidazole glycerol phosphate synthase subunit HisH from Shigella flexneri.